A 979-amino-acid polypeptide reads, in one-letter code: Protein SMAX1-LIKE 6 (979 aa).

Residues 8-190 (ARECLTEEAA…PVTQLSSRFS (183 aa)) enclose the Clp R domain. 2 repeat regions span residues 12 to 86 (LTEE…LDRL) and 100 to 190 (VSNS…SRFS). Positions 833 to 837 (LDLNL) match the EAR motif.

The protein belongs to the ClpA/ClpB family. Interacts with TPL/TPR in an EAR-motif dependent manner. Interacts with TPR3. Interacts with MAX2 and TPR2. Interacts with D14. The interaction with D14 occurs in the presence of (2'R) stereoisomers of strigolactones, but not (2'S) stereoisomers. Post-translationally, ubiquitinated upon strigolactone treatment. Probable proteolytic target of SCF(MAX2)-mediated stigolactone signaling. Detected in roots, seedlings and axillary branches. Expressed in the primary rosette buds and expanding leaves of adult rosettes, the vasculature of the hypocotyls, cotyledons, and mature roots, and in the midvein and petioles of young leaves.

It localises to the nucleus. In terms of biological role, probable component of a transcriptional corepressor complex involved in branching control. Regulates cotyledon expansion and lateral root growth, but not germination or hypocotyl elongation. Promotes auxin transport and PIN1 accumulation in the stem and represses BRC1/TCP18 expression in axillary buds. In Arabidopsis thaliana (Mouse-ear cress), this protein is Protein SMAX1-LIKE 6.